Consider the following 264-residue polypeptide: 3-deoxy-manno-octulosonate cytidylyltransferase (264 aa).

The protein belongs to the KdsB family.

Its subcellular location is the cytoplasm. The enzyme catalyses 3-deoxy-alpha-D-manno-oct-2-ulosonate + CTP = CMP-3-deoxy-beta-D-manno-octulosonate + diphosphate. The protein operates within nucleotide-sugar biosynthesis; CMP-3-deoxy-D-manno-octulosonate biosynthesis; CMP-3-deoxy-D-manno-octulosonate from 3-deoxy-D-manno-octulosonate and CTP: step 1/1. It functions in the pathway bacterial outer membrane biogenesis; lipopolysaccharide biosynthesis. In terms of biological role, activates KDO (a required 8-carbon sugar) for incorporation into bacterial lipopolysaccharide in Gram-negative bacteria. The sequence is that of 3-deoxy-manno-octulosonate cytidylyltransferase from Marinomonas sp. (strain MWYL1).